Reading from the N-terminus, the 1210-residue chain is Epidermal growth factor receptor (1210 aa).

The signal sequence occupies residues 1–24 (MRPSGTAGAALLALLAALCPASRA). Residues 25–645 (LEEKKVCQGT…CPTNGPKIPS (621 aa)) lie on the Extracellular side of the membrane. The cysteines at positions 31 and 58 are disulfide-linked. N-linked (GlcNAc...) (complex) asparagine; atypical; partial glycosylation is present at asparagine 56. Asparagine 73 carries an N-linked (GlcNAc...) asparagine; atypical glycan. The stretch at 75-300 (DLSFLKTIQE…CVKKCPRNYV (226 aa)) is one Approximate repeat. N-linked (GlcNAc...) asparagine glycans are attached at residues asparagine 128, asparagine 175, and asparagine 196. 13 cysteine pairs are disulfide-bonded: cysteine 157–cysteine 187, cysteine 190–cysteine 199, cysteine 194–cysteine 207, cysteine 215–cysteine 223, cysteine 219–cysteine 231, cysteine 232–cysteine 240, cysteine 236–cysteine 248, cysteine 251–cysteine 260, cysteine 264–cysteine 291, cysteine 295–cysteine 307, cysteine 311–cysteine 326, cysteine 329–cysteine 333, and cysteine 337–cysteine 362. Serine 229 carries the phosphoserine modification. N-linked (GlcNAc...) asparagine glycans are attached at residues asparagine 352, asparagine 361, asparagine 413, and asparagine 444. An Approximate repeat occupies 390 to 600 (QELDILKTVK…CVKTCPAGVM (211 aa)). 11 disulfides stabilise this stretch: cysteine 470–cysteine 499, cysteine 506–cysteine 515, cysteine 510–cysteine 523, cysteine 526–cysteine 535, cysteine 539–cysteine 555, cysteine 558–cysteine 571, cysteine 562–cysteine 579, cysteine 582–cysteine 591, cysteine 595–cysteine 617, cysteine 620–cysteine 628, and cysteine 624–cysteine 636. Asparagine 528 is a glycosylation site (N-linked (GlcNAc...) asparagine). The N-linked (GlcNAc...) asparagine; partial glycan is linked to asparagine 568. An N-linked (GlcNAc...) asparagine; partial glycan is attached at asparagine 603. N-linked (GlcNAc...) (high mannose) asparagine glycosylation is present at asparagine 623. Residues 646–668 (IATGMVGALLLLLVVALGIGLFM) traverse the membrane as a helical segment. Residues 669-1210 (RRRHIVRKRT…APQSSEFIGA (542 aa)) lie on the Cytoplasmic side of the membrane. Threonine 678 is subject to Phosphothreonine; by PKC and PKD/PRKD1. Residues 688 to 704 (LVEPLTPSGEAPNQALL) are important for dimerization, phosphorylation and activation. Threonine 693 is modified (phosphothreonine; by PKD/PRKD1). Serine 695 is subject to Phosphoserine. Residues 712–979 (FKKIKVLGSG…KMARDPQRYL (268 aa)) form the Protein kinase domain. Lysine 716 participates in a covalent cross-link: Glycyl lysine isopeptide (Lys-Gly) (interchain with G-Cter in ubiquitin). 718–726 (LGSGAFGTV) contacts ATP. A Glycyl lysine isopeptide (Lys-Gly) (interchain with G-Cter in ubiquitin) cross-link involves residue lysine 737. Position 745 (lysine 745) interacts with ATP. Lysine 745 is subject to N6-(2-hydroxyisobutyryl)lysine. Glycyl lysine isopeptide (Lys-Gly) (interchain with G-Cter in ubiquitin) cross-links involve residues lysine 754 and lysine 757. 790–791 (TQ) is an ATP binding site. Aspartate 837 functions as the Proton acceptor in the catalytic mechanism. Aspartate 855 contacts ATP. Lysine 867 is covalently cross-linked (Glycyl lysine isopeptide (Lys-Gly) (interchain with G-Cter in ubiquitin)). Phosphotyrosine is present on tyrosine 869. Residues lysine 929, lysine 960, and lysine 970 each participate in a glycyl lysine isopeptide (Lys-Gly) (interchain with G-Cter in ubiquitin) cross-link. 2 positions are modified to phosphoserine: serine 991 and serine 995. Tyrosine 998 and tyrosine 1016 each carry phosphotyrosine; by autocatalysis. Serine 1026 and serine 1039 each carry phosphoserine. Threonine 1041 carries the phosphothreonine modification. Serine 1042 carries the phosphoserine modification. Residue cysteine 1049 is the site of S-palmitoyl cysteine attachment. Residue serine 1064 is modified to Phosphoserine. Tyrosine 1069 carries the phosphotyrosine modification. Serine 1070, serine 1071, and serine 1081 each carry phosphoserine. Phosphotyrosine; by autocatalysis is present on residues tyrosine 1092 and tyrosine 1110. The segment at 1097 to 1137 (VPKRPAGSVQNPVYHNQPLNPAPSRDPHYQDPHSTAVGNPE) is disordered. 2 stretches are compositionally biased toward polar residues: residues 1104–1115 (SVQNPVYHNQPL) and 1128–1137 (PHSTAVGNPE). A lipid anchor (S-palmitoyl cysteine) is attached at cysteine 1146. Residue serine 1166 is modified to Phosphoserine. 2 positions are modified to phosphotyrosine; by autocatalysis: tyrosine 1172 and tyrosine 1197. Arginine 1199 carries the post-translational modification Omega-N-methylarginine.

The protein belongs to the protein kinase superfamily. Tyr protein kinase family. EGF receptor subfamily. In terms of assembly, binding of the ligand triggers homo- and/or heterodimerization of the receptor triggering its autophosphorylation. Heterodimer with ERBB2. Forms a complex with CCDC88A/GIV (via SH2-like regions) and GNAI3 which leads to enhanced EGFR signaling and triggering of cell migration; binding to CCDC88A requires autophosphorylation of the EGFR C-terminal region, and ligand stimulation is required for recruitment of GNAI3 to the complex. Interacts with ERRFI1; inhibits dimerization of the kinase domain and autophosphorylation. Part of a complex with ERBB2 and either PIK3C2A or PIK3C2B. Interacts with GRB2; an adapter protein coupling the receptor to downstream signaling pathways. Interacts with GAB2; involved in signaling downstream of EGFR. Interacts with STAT3; mediates EGFR downstream signaling in cell proliferation. Interacts with RIPK1; involved in NF-kappa-B activation. Interacts (autophosphorylated) with CBL, CBLB and CBLC; involved in EGFR ubiquitination and regulation; interaction with CBL is reduced in the presence of tensin TNS4. Interacts with SOCS5; regulates EGFR degradation through ELOC- and ELOB-mediated ubiquitination and proteasomal degradation. Interacts with PRMT5; methylates EGFR and enhances interaction with PTPN6. Interacts (phosphorylated) with PTPN6; inhibits EGFR-dependent activation of MAPK/ERK. Interacts with COPG1; essential for regulation of EGF-dependent nuclear transport of EGFR by retrograde trafficking from the Golgi to the ER. Interacts with TNK2; this interaction is dependent on EGF stimulation and kinase activity of EGFR. Interacts with PCNA; positively regulates PCNA. Interacts with PELP1. Interacts with MUC1. Interacts with AP2M1. Interacts with FER. May interact with EPS8; mediates EPS8 phosphorylation. Interacts (via SH2 domains) with GRB2, NCK1 and NCK2. Interacts with ATXN2. Interacts with GAREM1. Interacts (ubiquitinated) with ANKRD13A/B/D; the interaction is direct and may regulate EGFR internalization after EGF stimulation. Interacts with GPER1; the interaction occurs in an estrogen-dependent manner. Interacts (via C-terminal cytoplasmic kinase domain) with ZPR1 (via zinc fingers). Interacts with RNF115 and RNF126. Interacts with GPRC5A (via its transmembrane domain). Interacts with FAM83B; positively regulates EGFR inducing its autophosphorylation in absence of stimulation by EGF. Interacts with LAPTM4B; positively correlates with EGFR activation. Interacts with STX19. Interacts with CD44. Interacts with PGRMC1; the interaction requires PGRMC1 homodimerization. Interacts with PIKFYVE. Interacts with NEU3. Interacts with TRAF4. Interacts with the ant venom OMEGA-myrmeciitoxin(02)-Mg1a. Interacts with CD82; this interaction facilitates ligand-induced endocytosis of the receptor and its subsequent desensitization. In terms of processing, phosphorylated on Tyr residues in response to EGF. Phosphorylation at Ser-695 is partial and occurs only if Thr-693 is phosphorylated. Phosphorylation at Thr-678 and Thr-693 by PRKD1 inhibits EGF-induced MAPK8/JNK1 activation. Dephosphorylation by PTPRJ prevents endocytosis and stabilizes the receptor at the plasma membrane. Autophosphorylation at Tyr-1197 is stimulated by methylation at Arg-1199 and enhances interaction with PTPN6. Autophosphorylation at Tyr-1092 and/or Tyr-1110 recruits STAT3. Dephosphorylated by PTPN1 and PTPN2. Post-translationally, monoubiquitinated and polyubiquitinated upon EGF stimulation; which does not affect tyrosine kinase activity or signaling capacity but may play a role in lysosomal targeting. Polyubiquitin linkage is mainly through 'Lys-63', but linkage through 'Lys-48', 'Lys-11' and 'Lys-29' also occurs. Deubiquitination by OTUD7B prevents degradation. Ubiquitinated by RNF115 and RNF126. Ubiquitinated by ZNRF1 or CBL at different lysines in response to EGF stimulation; leading to recruitment of the ESCRT machinery and subsequent degradation in the lysosomes. Deubiquitinated by UCHL1 leading to the inhibition of its degradation. Palmitoylated on Cys residues by ZDHHC20. Palmitoylation inhibits internalization after ligand binding, and increases the persistence of tyrosine-phosphorylated EGFR at the cell membrane. Palmitoylation increases the amplitude and duration of EGFR signaling. In terms of processing, methylated. Methylation at Arg-1199 by PRMT5 stimulates phosphorylation at Tyr-1197. Ubiquitously expressed. Isoform 2 is also expressed in ovarian cancers.

Its subcellular location is the cell membrane. It is found in the endoplasmic reticulum membrane. The protein localises to the golgi apparatus membrane. The protein resides in the nucleus membrane. It localises to the endosome. Its subcellular location is the endosome membrane. It is found in the nucleus. The protein localises to the secreted. It catalyses the reaction L-tyrosyl-[protein] + ATP = O-phospho-L-tyrosyl-[protein] + ADP + H(+). Its activity is regulated as follows. Endocytosis and inhibition of the activated EGFR by phosphatases like PTPRJ and PTPRK constitute immediate regulatory mechanisms. Upon EGF-binding phosphorylates EPS15 that regulates EGFR endocytosis and activity. Moreover, inducible feedback inhibitors including LRIG1, SOCS4, SOCS5 and ERRFI1 constitute alternative regulatory mechanisms for the EGFR signaling. Up-regulated by NEU3-mediated desialylation of N-linked glycan at Asn-528. Receptor tyrosine kinase binding ligands of the EGF family and activating several signaling cascades to convert extracellular cues into appropriate cellular responses. Known ligands include EGF, TGFA/TGF-alpha, AREG, epigen/EPGN, BTC/betacellulin, epiregulin/EREG and HBEGF/heparin-binding EGF. Ligand binding triggers receptor homo- and/or heterodimerization and autophosphorylation on key cytoplasmic residues. The phosphorylated receptor recruits adapter proteins like GRB2 which in turn activates complex downstream signaling cascades. Activates at least 4 major downstream signaling cascades including the RAS-RAF-MEK-ERK, PI3 kinase-AKT, PLCgamma-PKC and STATs modules. May also activate the NF-kappa-B signaling cascade. Also directly phosphorylates other proteins like RGS16, activating its GTPase activity and probably coupling the EGF receptor signaling to the G protein-coupled receptor signaling. Also phosphorylates MUC1 and increases its interaction with SRC and CTNNB1/beta-catenin. Positively regulates cell migration via interaction with CCDC88A/GIV which retains EGFR at the cell membrane following ligand stimulation, promoting EGFR signaling which triggers cell migration. Plays a role in enhancing learning and memory performance. Plays a role in mammalian pain signaling (long-lasting hypersensitivity). In terms of biological role, isoform 2 may act as an antagonist of EGF action. Its function is as follows. (Microbial infection) Acts as a receptor for hepatitis C virus (HCV) in hepatocytes and facilitates its cell entry. Mediates HCV entry by promoting the formation of the CD81-CLDN1 receptor complexes that are essential for HCV entry and by enhancing membrane fusion of cells expressing HCV envelope glycoproteins. The protein is Epidermal growth factor receptor of Homo sapiens (Human).